The primary structure comprises 147 residues: Myoglobin (147 aa).

Residues 2-141 enclose the Globin domain; the sequence is ADFDMVLKCW…IIADMEADYK (140 aa). His60 provides a ligand contact to nitrite. Residue His60 coordinates O2. Residue His89 coordinates heme b.

The protein belongs to the globin family. Monomeric.

The protein resides in the cytoplasm. It localises to the sarcoplasm. The enzyme catalyses Fe(III)-heme b-[protein] + nitric oxide + H2O = Fe(II)-heme b-[protein] + nitrite + 2 H(+). It carries out the reaction H2O2 + AH2 = A + 2 H2O. In terms of biological role, monomeric heme protein which primary function is to store oxygen and facilitate its diffusion within muscle tissues. Reversibly binds oxygen through a pentacoordinated heme iron and enables its timely and efficient release as needed during periods of heightened demand. Depending on the oxidative conditions of tissues and cells, and in addition to its ability to bind oxygen, it also has a nitrite reductase activity whereby it regulates the production of bioactive nitric oxide. Under stress conditions, like hypoxia and anoxia, it also protects cells against reactive oxygen species thanks to its pseudoperoxidase activity. The sequence is that of Myoglobin (mb) from Gobionotothen gibberifrons (Humped rockcod).